We begin with the raw amino-acid sequence, 172 residues long: Large ribosomal subunit protein uL10 (172 aa).

Belongs to the universal ribosomal protein uL10 family. As to quaternary structure, part of the ribosomal stalk of the 50S ribosomal subunit. The N-terminus interacts with L11 and the large rRNA to form the base of the stalk. The C-terminus forms an elongated spine to which L12 dimers bind in a sequential fashion forming a multimeric L10(L12)X complex.

In terms of biological role, forms part of the ribosomal stalk, playing a central role in the interaction of the ribosome with GTP-bound translation factors. This chain is Large ribosomal subunit protein uL10, found in Mesorhizobium japonicum (strain LMG 29417 / CECT 9101 / MAFF 303099) (Mesorhizobium loti (strain MAFF 303099)).